The sequence spans 256 residues: Ribonuclease T2 (256 aa).

Positions 1-24 (MRPAALRGALLGCLCLALLCLGGA) are cleaved as a signal peptide. A disulfide bond links Cys48 and Cys55. Residue His65 is part of the active site. Disulfide bonds link Cys75–Cys121, Cys184–Cys241, and Cys202–Cys213. Residues Asn76 and Asn106 are each glycosylated (N-linked (GlcNAc...) asparagine). Active-site residues include Glu114 and His118. Asn212 is a glycosylation site (N-linked (GlcNAc...) asparagine).

This sequence belongs to the RNase T2 family. In terms of tissue distribution, ubiquitous. Higher expression levels observed in the temporal lobe and fetal brain.

It localises to the secreted. It is found in the lysosome lumen. The protein localises to the endoplasmic reticulum lumen. The protein resides in the mitochondrion intermembrane space. The enzyme catalyses a ribonucleotidyl-ribonucleotide-RNA + H2O = a 3'-end 3'-phospho-ribonucleotide-RNA + a 5'-end dephospho-ribonucleoside-RNA + H(+). It catalyses the reaction an adenylyl-uridine-RNA = a 3'-end 2',3'-cyclophospho-AMP-RNA + a 5'-end dephospho-uridine-RNA. It carries out the reaction a guanylyl-uridine-RNA = a 3'-end 2',3'-cyclophospho-GMP-RNA + a 5'-end dephospho-uridine-RNA. Its activity is regulated as follows. Inhibited by Zn(2+) and Cu(2+). Functionally, ribonuclease that plays an essential role in innate immune response by recognizing and degrading RNAs from microbial pathogens that are subsequently sensed by TLR8. Cleaves preferentially single-stranded RNA molecules between purine and uridine residues, which critically contributes to the supply of catabolic uridine and the generation of purine-2',3'-cyclophosphate-terminated oligoribonucleotides. In turn, RNase T2 degradation products promote the RNA-dependent activation of TLR8. In plasmacytoid dendritic cells, it cooperates with PLD3 or PLD4 5'-&gt;3' exonucleases to process RNA fragments and release 2',3'-cyclic guanosine monophosphate (2',3'-cGMP), a potent stimulatory ligand for TLR7. Also plays a key role in degradation of mitochondrial RNA and processing of non-coding RNA imported from the cytosol into mitochondria. Participates as well in degradation of mitochondrion-associated cytosolic rRNAs. In Homo sapiens (Human), this protein is Ribonuclease T2 (RNASET2).